A 247-amino-acid polypeptide reads, in one-letter code: UDP-2,3-diacylglucosamine hydrolase (247 aa).

Residues aspartate 8, histidine 10, aspartate 41, asparagine 79, and histidine 114 each contribute to the Mn(2+) site. 79–80 (NR) is a binding site for substrate. Aspartate 122, serine 160, aspartate 171, asparagine 174, and histidine 202 together coordinate substrate. Mn(2+) is bound by residues histidine 202 and histidine 204.

It belongs to the LpxH family. It depends on Mn(2+) as a cofactor.

It is found in the cell inner membrane. The catalysed reaction is UDP-2-N,3-O-bis[(3R)-3-hydroxytetradecanoyl]-alpha-D-glucosamine + H2O = 2-N,3-O-bis[(3R)-3-hydroxytetradecanoyl]-alpha-D-glucosaminyl 1-phosphate + UMP + 2 H(+). The protein operates within glycolipid biosynthesis; lipid IV(A) biosynthesis; lipid IV(A) from (3R)-3-hydroxytetradecanoyl-[acyl-carrier-protein] and UDP-N-acetyl-alpha-D-glucosamine: step 4/6. In terms of biological role, hydrolyzes the pyrophosphate bond of UDP-2,3-diacylglucosamine to yield 2,3-diacylglucosamine 1-phosphate (lipid X) and UMP by catalyzing the attack of water at the alpha-P atom. Involved in the biosynthesis of lipid A, a phosphorylated glycolipid that anchors the lipopolysaccharide to the outer membrane of the cell. The sequence is that of UDP-2,3-diacylglucosamine hydrolase from Xanthomonas oryzae pv. oryzae (strain MAFF 311018).